Consider the following 287-residue polypeptide: tRNA N(3)-cytidine methyltransferase METTL6 (287 aa).

S-adenosyl-L-methionine contacts are provided by Trp-45, Tyr-49, Gly-87, Asp-110, Asp-136, Leu-137, and Ile-157. Residues 267 to 287 (RKPPKDPAPTTDSASLLRKEF) are disordered.

Belongs to the methyltransferase superfamily. METL family. Monomer. Interacts with SARS1/SerRS; interaction is mediated via tRNA(Ser) and is required for N(3)-methylcytidine methylation.

The protein localises to the cytoplasm. It localises to the nucleus. The enzyme catalyses cytidine(32) in tRNA(Ser) + S-adenosyl-L-methionine = N(3)-methylcytidine(32) in tRNA(Ser) + S-adenosyl-L-homocysteine + H(+). S-adenosyl-L-methionine-dependent methyltransferase that mediates N(3)-methylcytidine modification of residue 32 of the tRNA anticodon loop of tRNA(Ser), including tRNA(Ser)(UGA) and tRNA(Ser)(GCU). Interaction with SARS1/SerRS is required for N(3)-methylcytidine methylation. In Rattus norvegicus (Rat), this protein is tRNA N(3)-cytidine methyltransferase METTL6 (Mettl6).